The following is a 530-amino-acid chain: UPF0422 protein lpl2888 (530 aa).

An N-terminal signal peptide occupies residues 1–19 (MKFKKIILALACLSSPLYA). Positions 20-66 (DQDQQLKSEIQRLQHQAEDLQAQLNRLQKQLANHKSSQQKHEQQAAT) form a coiled coil. The segment at 50–81 (LANHKSSQQKHEQQAATKPAEPQSKPTVKSGA) is disordered.

This sequence belongs to the UPF0422 family.

This Legionella pneumophila (strain Lens) protein is UPF0422 protein lpl2888.